Here is a 306-residue protein sequence, read N- to C-terminus: D-alanine--D-alanine ligase (306 aa).

Residues 102-300 (KIIAANAGVC…YGDIVQWMVE (199 aa)) form the ATP-grasp domain. Position 128-183 (128-183 (PMEPPYVIKPVCEGSSFGVVIVQENEAVPPHNIGGSEWGYADEVMVEKYIPGRELT)) interacts with ATP. Mg(2+) is bound by residues D253, E267, and N269.

This sequence belongs to the D-alanine--D-alanine ligase family. Mg(2+) serves as cofactor. The cofactor is Mn(2+).

It localises to the cytoplasm. The enzyme catalyses 2 D-alanine + ATP = D-alanyl-D-alanine + ADP + phosphate + H(+). It participates in cell wall biogenesis; peptidoglycan biosynthesis. In terms of biological role, cell wall formation. The protein is D-alanine--D-alanine ligase of Bartonella tribocorum (strain CIP 105476 / IBS 506).